The following is a 251-amino-acid chain: tRNA pseudouridine synthase A (251 aa).

Asp-56 (nucleophile) is an active-site residue. Tyr-110 is a binding site for substrate.

The protein belongs to the tRNA pseudouridine synthase TruA family.

The enzyme catalyses uridine(38/39/40) in tRNA = pseudouridine(38/39/40) in tRNA. In terms of biological role, formation of pseudouridine at positions 38, 39 and 40 in the anticodon stem and loop of transfer RNAs. In Picrophilus torridus (strain ATCC 700027 / DSM 9790 / JCM 10055 / NBRC 100828 / KAW 2/3), this protein is tRNA pseudouridine synthase A.